Here is a 239-residue protein sequence, read N- to C-terminus: Tungstate uptake system permease protein TupB (239 aa).

The ABC transmembrane type-1 domain occupies 37-233; it reads IKTTLLSSSI…LIAFCLNFIT (197 aa). The next 5 helical transmembrane spans lie at 45-65, 76-96, 114-134, 168-188, and 212-232; these read SISIVLALLIGFPLGFILGFF, IVDTSLSFPTVAVGLILYALI, LILGQFILALPIVIALFSNLI, ISVVALAYGRIVAEVGVAMIV, and FASGIALALVLILIAFCLNFI.

Belongs to the binding-protein-dependent transport system permease family. As to quaternary structure, the complex is composed of two ATP-binding proteins (TupC), two transmembrane proteins (TupB) and a solute-binding protein (TupA).

The protein resides in the cell inner membrane. Part of an ABC transporter complex involved in ultra-high affinity tungstate uptake. Probably responsible for the translocation of the substrate across the membrane. The chain is Tungstate uptake system permease protein TupB from Campylobacter jejuni subsp. jejuni serotype O:2 (strain ATCC 700819 / NCTC 11168).